The following is a 94-amino-acid chain: Co-chaperonin GroES (94 aa).

Belongs to the GroES chaperonin family. Heptamer of 7 subunits arranged in a ring. Interacts with the chaperonin GroEL.

It localises to the cytoplasm. Its function is as follows. Together with the chaperonin GroEL, plays an essential role in assisting protein folding. The GroEL-GroES system forms a nano-cage that allows encapsulation of the non-native substrate proteins and provides a physical environment optimized to promote and accelerate protein folding. GroES binds to the apical surface of the GroEL ring, thereby capping the opening of the GroEL channel. The polypeptide is Co-chaperonin GroES (Ligilactobacillus salivarius (strain UCC118) (Lactobacillus salivarius)).